We begin with the raw amino-acid sequence, 71 residues long: Large ribosomal subunit protein uL30 (71 aa).

The protein belongs to the universal ribosomal protein uL30 family. In terms of assembly, part of the 50S ribosomal subunit.

This chain is Large ribosomal subunit protein uL30, found in Mycobacterium leprae (strain TN).